Reading from the N-terminus, the 503-residue chain is MEFSVKSGSPEKQRSACIVVGVFEPRRLSPIAEQLDKISDGYISALLRRGELEGKVGQTLLLHHVPNILSERILLIGCGKERELDERQYKQVIQKTINTLNDTGSMEAVCFLTELHVKGRNTYWKVRQAVETSKEALYSFDQLKSNKVEPRRPLRKLVFNVPTRRELTSGERAIQHGLAVAAGVKAAKDLGNMPPNICNAAYLASQARQLADAYSKNITTRVIGEQQMKELGMNAYLAVGQGSQNESLMSVIEYKGNPDAEARPIVLVGKGVTFDTGGISLKPGEAMDEMKYDMCGAASVYGVMRMVAELNLPLNVVGVLAGCENMPGGRAYRPGDVLTTMSGQTVEVLNTDAEGRLVLCDALTYVERFDPEVVIDVATLTGACVIALGHHISGLLSNHNPLAHELIGASEQAGDRAWRLPMADEYQDQLESNFADMANIGGRPGGAITAACFLARFTRKYNWAHLDVAGTAWRSGKAKGATGRPVALLSQFLLNRAGLNGDD.

Mn(2+) contacts are provided by lysine 270 and aspartate 275. Lysine 282 is a catalytic residue. Positions 293, 352, and 354 each coordinate Mn(2+). Residue arginine 356 is part of the active site.

This sequence belongs to the peptidase M17 family. Requires Mn(2+) as cofactor.

It localises to the cytoplasm. It catalyses the reaction Release of an N-terminal amino acid, Xaa-|-Yaa-, in which Xaa is preferably Leu, but may be other amino acids including Pro although not Arg or Lys, and Yaa may be Pro. Amino acid amides and methyl esters are also readily hydrolyzed, but rates on arylamides are exceedingly low.. The enzyme catalyses Release of an N-terminal amino acid, preferentially leucine, but not glutamic or aspartic acids.. Functionally, presumably involved in the processing and regular turnover of intracellular proteins. Catalyzes the removal of unsubstituted N-terminal amino acids from various peptides. This Erwinia tasmaniensis (strain DSM 17950 / CFBP 7177 / CIP 109463 / NCPPB 4357 / Et1/99) protein is Probable cytosol aminopeptidase.